The following is a 294-amino-acid chain: tRNA pseudouridine synthase B (294 aa).

Asp-38 acts as the Nucleophile in catalysis.

The protein belongs to the pseudouridine synthase TruB family. Type 1 subfamily.

It catalyses the reaction uridine(55) in tRNA = pseudouridine(55) in tRNA. Responsible for synthesis of pseudouridine from uracil-55 in the psi GC loop of transfer RNAs. In Clostridium perfringens (strain ATCC 13124 / DSM 756 / JCM 1290 / NCIMB 6125 / NCTC 8237 / Type A), this protein is tRNA pseudouridine synthase B.